Reading from the N-terminus, the 790-residue chain is Ice-structuring glycoprotein (790 aa).

The propeptide occupies 1–5 (VTAAP).

Post-translationally, O-glycosylated; contains disaccharide galactose-N-acetylgalactosamine attached to threonines in AFGP8 and AFGP7. In terms of tissue distribution, synthesized by the liver and secreted into the blood from which they become distributed to almost the entire extracellular space.

It is found in the secreted. In terms of biological role, antifreeze proteins lower the blood freezing point. This Notothenia neglecta (Yellowbelly rockcod) protein is Ice-structuring glycoprotein (afgp8).